Reading from the N-terminus, the 167-residue chain is Brain ribonuclease (167 aa).

The N-terminal stretch at 1–26 (MALKSLVLLSLLVLVLLLVQVQPSLG) is a signal peptide. Substrate contacts are provided by Lys33 and Arg36. The Proton acceptor role is filled by His38. Cystine bridges form between Cys52/Cys110, Cys66/Cys121, Cys84/Cys136, and Cys91/Cys98. A substrate-binding site is contributed by 67–71 (KPVNT). Asn88 is a glycosylation site (N-linked (GlcNAc...) asparagine). Substrate-binding residues include Lys92 and Arg111. His145 functions as the Proton donor in the catalytic mechanism. Residue Thr155 is glycosylated (O-linked (GalNAc...) threonine). The O-linked (GalNAc...) serine glycan is linked to Ser159.

It belongs to the pancreatic ribonuclease family.

It is found in the secreted. In Bos taurus (Bovine), this protein is Brain ribonuclease (BRN).